A 167-amino-acid chain; its full sequence is MALKTDIRGMIWRYPDYFVVGREQLRQFALSVKNRHPAHFSEDAAAELGHDAIIAPLTFATIFAKLVQLDFFRHVDIGMETLVIVQVDQRFVFSKPIKAGDKLWARMDIVSVDERFGADIVVTKNICTNDDGELVLEAYTTLMSQFNGDQSAKLRWDSESGQVVRTA.

The MaoC-like domain maps to 21–124 (GREQLRQFAL…RFGADIVVTK (104 aa)).

The protein belongs to the UPF0336 family.

In Mycolicibacterium paratuberculosis (strain ATCC BAA-968 / K-10) (Mycobacterium paratuberculosis), this protein is UPF0336 protein MAP_4109.